The chain runs to 90 residues: Small ribosomal subunit protein uS15c (90 aa).

Residues 1 to 11 are compositionally biased toward polar residues; the sequence is MVKNSFSSVIS. The segment at 1–20 is disordered; it reads MVKNSFSSVISQEEKKENGG.

This sequence belongs to the universal ribosomal protein uS15 family. As to quaternary structure, part of the 30S ribosomal subunit.

The protein localises to the plastid. It localises to the chloroplast. The chain is Small ribosomal subunit protein uS15c (rps15) from Cucumis sativus (Cucumber).